The chain runs to 90 residues: Probable Fe(2+)-trafficking protein (90 aa).

This sequence belongs to the Fe(2+)-trafficking protein family.

In terms of biological role, could be a mediator in iron transactions between iron acquisition and iron-requiring processes, such as synthesis and/or repair of Fe-S clusters in biosynthetic enzymes. The sequence is that of Probable Fe(2+)-trafficking protein from Acidovorax ebreus (strain TPSY) (Diaphorobacter sp. (strain TPSY)).